The following is a 286-amino-acid chain: Dioxygenase trt7 (286 aa).

The Fe cation site is built by H129, D131, and H206.

It belongs to the PhyH family. In terms of assembly, homodimer. Fe cation serves as cofactor.

It participates in secondary metabolite biosynthesis; terpenoid biosynthesis. Functionally, dioxygenase; part of the gene cluster that mediates the biosynthesis of terretonin, a fungal meroterpenoid that acts as a mycotoxin. The first step of the pathway is the synthesis of 3,5-dimethylorsellinic acid (DMOA) by the polyketide synthase trt4. DMOA is then prenylated into farnesyl-DMOA by the polyprenyl transferase trt2. Methylation by the methyltransferase trt5 then leads to farnesyl-DMOA methyl ester which is further subject to epoxidation by the FAD-dependent monooxygenase trt8 to yield epoxyfarnesyl-DMOA methyl ester. Cyclization of epoxyfarnesyl-DMOA methyl ester by the terpene cyclase trt1 leads to a tetracycle intermediate which is in turn converted to preterretonin. Dehydrogenase trt9 comes next to transform preterretonin to preterrenoid. The FAD-dependent monooxygenase trt3 is then required for the C-hydroxylation at C16 of preterrenoid to yield terrenoid. The cytochrome P450 trt6 catalyzes three successive oxidations to transform terrenoid into an unstable intermediate, which then undergoes the D-ring expansion and unusual rearrangement of the methoxy group to afford the core skeleton of terretonin. Trt14 catalyzes the D-ring expansion of terretonin involving intramolecular methoxy rearrangement as well as the hydrolysis of the expanded D-ring and the methyl ester moiety. Finally, the nonheme iron-dependent dioxygenase trt7 accomplishes the last two oxidation reactions steps to complete the biosynthesis of terretonin. Terretonin C is produced via spontaneous decarboxylation of the terretonin precursor. Another shunt product of the terretonin biosynthesis is dihydrofarnesyl-DMOA, derived from epoxyfarnesyl-DMOA through hydrolysis of the epoxide. This chain is Dioxygenase trt7, found in Aspergillus terreus (strain NIH 2624 / FGSC A1156).